The chain runs to 334 residues: Thiamine-binding periplasmic protein (334 aa).

A signal peptide spans methionine 1–alanine 23. Thiamine contacts are provided by residues aspartate 64 to glycine 65, alanine 166 to threonine 167, tryptophan 202, and tyrosine 220 to serine 223.

The protein belongs to the bacterial solute-binding protein 1 family. In terms of assembly, the complex is composed of two ATP-binding proteins (ThiQ), two transmembrane proteins (ThiP) and a solute-binding protein (ThiB).

It is found in the periplasm. In terms of biological role, part of the ABC transporter complex ThiBPQ involved in thiamine import. In Brucella melitensis biotype 1 (strain ATCC 23456 / CCUG 17765 / NCTC 10094 / 16M), this protein is Thiamine-binding periplasmic protein (thiB).